Consider the following 98-residue polypeptide: Aspartyl/glutamyl-tRNA(Asn/Gln) amidotransferase subunit C (98 aa).

It belongs to the GatC family. As to quaternary structure, heterotrimer of A, B and C subunits.

It carries out the reaction L-glutamyl-tRNA(Gln) + L-glutamine + ATP + H2O = L-glutaminyl-tRNA(Gln) + L-glutamate + ADP + phosphate + H(+). It catalyses the reaction L-aspartyl-tRNA(Asn) + L-glutamine + ATP + H2O = L-asparaginyl-tRNA(Asn) + L-glutamate + ADP + phosphate + 2 H(+). In terms of biological role, allows the formation of correctly charged Asn-tRNA(Asn) or Gln-tRNA(Gln) through the transamidation of misacylated Asp-tRNA(Asn) or Glu-tRNA(Gln) in organisms which lack either or both of asparaginyl-tRNA or glutaminyl-tRNA synthetases. The reaction takes place in the presence of glutamine and ATP through an activated phospho-Asp-tRNA(Asn) or phospho-Glu-tRNA(Gln). The sequence is that of Aspartyl/glutamyl-tRNA(Asn/Gln) amidotransferase subunit C from Microcystis aeruginosa (strain NIES-843 / IAM M-2473).